The chain runs to 538 residues: Capsular polysaccharide biosynthesis protein RkpI (538 aa).

The next 6 helical transmembrane spans lie at 16–36, 70–90, 114–134, 139–159, 170–190, and 212–232; these read LHDYPIALTLGCYLLSCAVIF, VIALVFAGFFAISWRPLYAAA, LVFSDIALVADVFKYKTIFYA, IVFWIVAFLYVFGVSALYMYF, LFWVLVMVGIAAGPWGLLFYG, and NTVRFGTFASVVFHFIIWLGV.

Its subcellular location is the cell membrane. It functions in the pathway capsule biogenesis; capsule polysaccharide biosynthesis. Involved in antigen K (capsular polysaccharide) biosynthesis. This is Capsular polysaccharide biosynthesis protein RkpI (rkpI) from Rhizobium meliloti (strain 1021) (Ensifer meliloti).